Consider the following 188-residue polypeptide: Translation initiation factor IF-3 (188 aa).

This sequence belongs to the IF-3 family. Monomer.

Its subcellular location is the cytoplasm. IF-3 binds to the 30S ribosomal subunit and shifts the equilibrium between 70S ribosomes and their 50S and 30S subunits in favor of the free subunits, thus enhancing the availability of 30S subunits on which protein synthesis initiation begins. This is Translation initiation factor IF-3 from Fusobacterium nucleatum subsp. nucleatum (strain ATCC 25586 / DSM 15643 / BCRC 10681 / CIP 101130 / JCM 8532 / KCTC 2640 / LMG 13131 / VPI 4355).